A 216-amino-acid chain; its full sequence is Probable GTP-binding protein EngB (216 aa).

The 182-residue stretch at 24 to 205 (ATPEIAFVGR…WARLAALAAE (182 aa)) folds into the EngB-type G domain. Residues 32-39 (GRSNVGKS), 59-63 (GRTRA), 86-89 (DLPG), 153-156 (TKTD), and 184-186 (FSA) contribute to the GTP site. Residues Ser39 and Thr61 each coordinate Mg(2+).

The protein belongs to the TRAFAC class TrmE-Era-EngA-EngB-Septin-like GTPase superfamily. EngB GTPase family. Requires Mg(2+) as cofactor.

Its function is as follows. Necessary for normal cell division and for the maintenance of normal septation. The polypeptide is Probable GTP-binding protein EngB (Anaeromyxobacter dehalogenans (strain 2CP-1 / ATCC BAA-258)).